Consider the following 322-residue polypeptide: Ferredoxin--NADP reductase (322 aa).

Residues E37, Q45, Y50, I91, F128, and D290 each coordinate FAD.

The protein belongs to the ferredoxin--NADP reductase type 2 family. In terms of assembly, homodimer. It depends on FAD as a cofactor.

It catalyses the reaction 2 reduced [2Fe-2S]-[ferredoxin] + NADP(+) + H(+) = 2 oxidized [2Fe-2S]-[ferredoxin] + NADPH. This is Ferredoxin--NADP reductase from Malacoplasma penetrans (strain HF-2) (Mycoplasma penetrans).